The primary structure comprises 177 residues: Translation initiation factor IF-3 (177 aa).

The protein belongs to the IF-3 family. Monomer.

The protein localises to the cytoplasm. In terms of biological role, IF-3 binds to the 30S ribosomal subunit and shifts the equilibrium between 70S ribosomes and their 50S and 30S subunits in favor of the free subunits, thus enhancing the availability of 30S subunits on which protein synthesis initiation begins. In Elusimicrobium minutum (strain Pei191), this protein is Translation initiation factor IF-3.